Consider the following 380-residue polypeptide: Cytochrome b (380 aa).

Helical transmembrane passes span 33–53 (FGSL…FLAM), 77–98 (WIIR…FLHV), 113–133 (WNIG…GYVL), and 178–198 (FFTL…LHLL). 2 residues coordinate heme b: H83 and H97. Residues H182 and H196 each coordinate heme b. Position 201 (H201) interacts with a ubiquinone. Transmembrane regions (helical) follow at residues 226–246 (TKDI…TLFS), 288–308 (LGGV…PILH), 320–340 (LSQL…WIGG), and 347–367 (FITI…ILMP).

The protein belongs to the cytochrome b family. In terms of assembly, the cytochrome bc1 complex contains 11 subunits: 3 respiratory subunits (MT-CYB, CYC1 and UQCRFS1), 2 core proteins (UQCRC1 and UQCRC2) and 6 low-molecular weight proteins (UQCRH/QCR6, UQCRB/QCR7, UQCRQ/QCR8, UQCR10/QCR9, UQCR11/QCR10 and a cleavage product of UQCRFS1). This cytochrome bc1 complex then forms a dimer. Heme b serves as cofactor.

The protein resides in the mitochondrion inner membrane. Component of the ubiquinol-cytochrome c reductase complex (complex III or cytochrome b-c1 complex) that is part of the mitochondrial respiratory chain. The b-c1 complex mediates electron transfer from ubiquinol to cytochrome c. Contributes to the generation of a proton gradient across the mitochondrial membrane that is then used for ATP synthesis. The sequence is that of Cytochrome b (MT-CYB) from Pan paniscus (Pygmy chimpanzee).